The sequence spans 290 residues: Glutamate racemase (290 aa).

Substrate contacts are provided by residues 24–25 (DS) and 56–57 (YG). The Proton donor/acceptor role is filled by C87. 88-89 (NT) is a substrate binding site. Residue C199 is the Proton donor/acceptor of the active site. 200 to 201 (TH) is a binding site for substrate. A disordered region spans residues 271–290 (GADGASLPDPPSPRIELTTT).

The protein belongs to the aspartate/glutamate racemases family.

It carries out the reaction L-glutamate = D-glutamate. The protein operates within cell wall biogenesis; peptidoglycan biosynthesis. In terms of biological role, provides the (R)-glutamate required for cell wall biosynthesis. The chain is Glutamate racemase from Deinococcus radiodurans (strain ATCC 13939 / DSM 20539 / JCM 16871 / CCUG 27074 / LMG 4051 / NBRC 15346 / NCIMB 9279 / VKM B-1422 / R1).